A 950-amino-acid chain; its full sequence is A disintegrin and metalloproteinase with thrombospondin motifs 15 (950 aa).

A signal peptide spans 1-17; it reads MLLLGILTLAFAGRTAG. Residues 18–212 constitute a propeptide that is removed on maturation; the sequence is GSEPEREVVV…SRRRSGRAKR (195 aa). The N-linked (GlcNAc...) asparagine glycan is linked to Asn-141. Residues 151 to 172 form a disordered region; that stretch reads SQGAHLLQRRGVPGGPSGDPTS. The Cysteine switch motif lies at 172 to 179; it reads SRCGVASG. A Zn(2+)-binding site is contributed by Cys-174. The region spanning 218–427 is the Peptidase M12B domain; that stretch reads RYVETLVVAD…GHGDCLLDQP (210 aa). 11 disulfide bridges follow: Cys-293–Cys-345, Cys-322–Cys-327, Cys-339–Cys-422, Cys-377–Cys-406, Cys-448–Cys-470, Cys-459–Cys-480, Cys-465–Cys-499, Cys-493–Cys-504, Cys-528–Cys-565, Cys-532–Cys-570, and Cys-543–Cys-555. His-361 contacts Zn(2+). The active site involves Glu-362. Zn(2+) is bound by residues His-365 and His-371. Residues 428–515 form the Disintegrin domain; sequence SKPISLPEDL…ERHNLNKHRV (88 aa). Residues 516 to 571 enclose the TSP type-1 1 domain; sequence DGSWAKWDPYGPCSRTCGGGVQLARRQCTNPTPANGGKYCEGVRVKYRSCNLEPCP. N-linked (GlcNAc...) asparagine glycosylation is found at Asn-591, Asn-623, and Asn-679. The interval 701–838 is spacer; it reads AIPAGASSID…SNQVEQPDDR (138 aa). The segment at 798–822 is disordered; it reads FYLPKEPREDKSSHPKDPRGPSVLH. The span at 802–816 shows a compositional bias: basic and acidic residues; sequence KEPREDKSSHPKDPR. TSP type-1 domains follow at residues 839–895 and 896–949; these read PPAR…EPCP and TWEL…VLRP.

Zn(2+) is required as a cofactor. The precursor is cleaved by a furin endopeptidase. Post-translationally, glycosylated. Can be O-fucosylated by POFUT2 on a serine or a threonine residue found within the consensus sequence C1-X(2)-(S/T)-C2-G of the TSP type-1 repeat domains where C1 and C2 are the first and second cysteine residue of the repeat, respectively. Fucosylated repeats can then be further glycosylated by the addition of a beta-1,3-glucose residue by the glucosyltransferase, B3GALTL. Fucosylation mediates the efficient secretion of ADAMTS family members. Can be C-glycosylated with one or two mannose molecules on tryptophan residues within the consensus sequence W-X-X-W of the TPRs. Also N-glycosylated. These other glycosylations can also facilitate secretion. As to expression, expressed in fetal liver and kidney, but not in any of the adult tissues examined.

The protein localises to the secreted. It localises to the extracellular space. It is found in the extracellular matrix. Its subcellular location is the cell surface. Its function is as follows. Metalloprotease which has proteolytic activity against the proteoglycan VCAN, cleaving it at the 'Glu-1428-|-1429-Ala' site. Cleaves VCAN in the pericellular matrix surrounding myoblasts, facilitating myoblast contact and fusion which is required for skeletal muscle development and regeneration. This is A disintegrin and metalloproteinase with thrombospondin motifs 15 (ADAMTS15) from Homo sapiens (Human).